We begin with the raw amino-acid sequence, 305 residues long: Probable branched-chain-amino-acid aminotransferase (305 aa).

Lys-156 bears the N6-(pyridoxal phosphate)lysine mark.

It belongs to the class-IV pyridoxal-phosphate-dependent aminotransferase family. Requires pyridoxal 5'-phosphate as cofactor.

It carries out the reaction L-leucine + 2-oxoglutarate = 4-methyl-2-oxopentanoate + L-glutamate. It catalyses the reaction L-isoleucine + 2-oxoglutarate = (S)-3-methyl-2-oxopentanoate + L-glutamate. The enzyme catalyses L-valine + 2-oxoglutarate = 3-methyl-2-oxobutanoate + L-glutamate. The protein operates within amino-acid biosynthesis; L-isoleucine biosynthesis; L-isoleucine from 2-oxobutanoate: step 4/4. It participates in amino-acid biosynthesis; L-leucine biosynthesis; L-leucine from 3-methyl-2-oxobutanoate: step 4/4. It functions in the pathway amino-acid biosynthesis; L-valine biosynthesis; L-valine from pyruvate: step 4/4. Its function is as follows. Acts on leucine, isoleucine and valine. In Synechocystis sp. (strain ATCC 27184 / PCC 6803 / Kazusa), this protein is Probable branched-chain-amino-acid aminotransferase (ilvE).